We begin with the raw amino-acid sequence, 452 residues long: Putative tripartite motif-containing protein 49B (452 aa).

An RING-type zinc finger spans residues 15–56 (CPICMNYFIDPVTIDCGHSFCRPCFYLNWKDSPFLVQCSECT). A B box-type zinc finger spans residues 88-129 (SEEQMCGTHRETKKMFCEVDRSLLCLLCSSSQEHRDHRHCPI). Zn(2+) is bound by residues Cys93, His96, Cys115, and His121. The B30.2/SPRY domain maps to 269–452 (ELSAGPITGL…LRPIFCCIHF (184 aa)).

The protein belongs to the TRIM/RBCC family.

The protein is Putative tripartite motif-containing protein 49B (TRIM49B) of Homo sapiens (Human).